The sequence spans 161 residues: Phosphopantetheine adenylyltransferase (161 aa).

Position 11 (serine 11) interacts with substrate. ATP-binding positions include 11 to 12 and histidine 19; that span reads SF. Residues lysine 43, leucine 75, and arginine 89 each coordinate substrate. ATP contacts are provided by residues 90 to 92, glutamate 100, and 125 to 131; these read GLR and YSFISSS.

It belongs to the bacterial CoaD family. In terms of assembly, homohexamer. Mg(2+) is required as a cofactor.

The protein resides in the cytoplasm. It carries out the reaction (R)-4'-phosphopantetheine + ATP + H(+) = 3'-dephospho-CoA + diphosphate. It functions in the pathway cofactor biosynthesis; coenzyme A biosynthesis; CoA from (R)-pantothenate: step 4/5. Reversibly transfers an adenylyl group from ATP to 4'-phosphopantetheine, yielding dephospho-CoA (dPCoA) and pyrophosphate. The protein is Phosphopantetheine adenylyltransferase of Staphylococcus carnosus (strain TM300).